Reading from the N-terminus, the 337-residue chain is GTP 3',8-cyclase (337 aa).

The 226-residue stretch at 17-242 (TFQREYYYLR…RQKDRTDGPA (226 aa)) folds into the Radical SAM core domain. Arg-26 provides a ligand contact to GTP. The [4Fe-4S] cluster site is built by Cys-33 and Cys-37. Tyr-39 serves as a coordination point for S-adenosyl-L-methionine. Position 40 (Cys-40) interacts with [4Fe-4S] cluster. Arg-76 provides a ligand contact to GTP. Residue Gly-80 coordinates S-adenosyl-L-methionine. Thr-107 provides a ligand contact to GTP. Residue Ser-131 participates in S-adenosyl-L-methionine binding. A GTP-binding site is contributed by Lys-168. Met-202 serves as a coordination point for S-adenosyl-L-methionine. Residues Cys-265 and Cys-268 each coordinate [4Fe-4S] cluster. GTP is bound at residue 270–272 (RLR). Cys-282 contributes to the [4Fe-4S] cluster binding site.

The protein belongs to the radical SAM superfamily. MoaA family. Monomer and homodimer. The cofactor is [4Fe-4S] cluster.

The catalysed reaction is GTP + AH2 + S-adenosyl-L-methionine = (8S)-3',8-cyclo-7,8-dihydroguanosine 5'-triphosphate + 5'-deoxyadenosine + L-methionine + A + H(+). It functions in the pathway cofactor biosynthesis; molybdopterin biosynthesis. Its function is as follows. Catalyzes the cyclization of GTP to (8S)-3',8-cyclo-7,8-dihydroguanosine 5'-triphosphate. This Mannheimia succiniciproducens (strain KCTC 0769BP / MBEL55E) protein is GTP 3',8-cyclase.